We begin with the raw amino-acid sequence, 365 residues long: Isopentenyl-diphosphate delta-isomerase (365 aa).

8–9 (RK) is a substrate binding site. FMN is bound by residues 67–69 (SIT), Ser-97, and Asn-126. 97-99 (SQR) serves as a coordination point for substrate. Gln-160 provides a ligand contact to substrate. Glu-161 provides a ligand contact to Mg(2+). FMN is bound by residues Lys-192, Thr-222, 272 to 274 (GVR), and 293 to 294 (AL).

It belongs to the IPP isomerase type 2 family. Homooctamer. Dimer of tetramers. FMN is required as a cofactor. The cofactor is NADPH. Mg(2+) serves as cofactor.

It localises to the cytoplasm. The enzyme catalyses isopentenyl diphosphate = dimethylallyl diphosphate. In terms of biological role, involved in the biosynthesis of isoprenoids. Catalyzes the 1,3-allylic rearrangement of the homoallylic substrate isopentenyl (IPP) to its allylic isomer, dimethylallyl diphosphate (DMAPP). The chain is Isopentenyl-diphosphate delta-isomerase from Methanosarcina acetivorans (strain ATCC 35395 / DSM 2834 / JCM 12185 / C2A).